The primary structure comprises 138 residues: MSTDSIVKASNWRLVEVGRVVLIKKGQSAGKLAAIVEIIDQKKVLIDGPKAGVPRQAINLGQVVLTPLTFALPRGARTATVSKKWAAAGVCEKWAASSWAKKIAQRERRAALTDFERFQVMVLRKQKRYTVKKALAKA.

The residue at position 2 (S2) is an N-acetylserine.

Belongs to the eukaryotic ribosomal protein eL14 family. In terms of assembly, component of the large ribosomal subunit (LSU). Mature yeast ribosomes consist of a small (40S) and a large (60S) subunit. The 40S small subunit contains 1 molecule of ribosomal RNA (18S rRNA) and 33 different proteins (encoded by 57 genes). The large 60S subunit contains 3 rRNA molecules (25S, 5.8S and 5S rRNA) and 46 different proteins (encoded by 81 genes). N-terminally acetylated by acetyltransferase NatA.

It localises to the cytoplasm. Its function is as follows. Component of the ribosome, a large ribonucleoprotein complex responsible for the synthesis of proteins in the cell. The small ribosomal subunit (SSU) binds messenger RNAs (mRNAs) and translates the encoded message by selecting cognate aminoacyl-transfer RNA (tRNA) molecules. The large subunit (LSU) contains the ribosomal catalytic site termed the peptidyl transferase center (PTC), which catalyzes the formation of peptide bonds, thereby polymerizing the amino acids delivered by tRNAs into a polypeptide chain. The nascent polypeptides leave the ribosome through a tunnel in the LSU and interact with protein factors that function in enzymatic processing, targeting, and the membrane insertion of nascent chains at the exit of the ribosomal tunnel. In Saccharomyces cerevisiae (strain ATCC 204508 / S288c) (Baker's yeast), this protein is Large ribosomal subunit protein eL14B.